Reading from the N-terminus, the 256-residue chain is 5-keto-4-deoxy-D-glucarate aldolase (256 aa).

The active-site Proton acceptor is His-50. Gln-151 lines the substrate pocket. Residue Glu-153 participates in Mg(2+) binding. Ser-178 and Asp-179 together coordinate substrate. Residue Asp-179 participates in Mg(2+) binding.

Belongs to the HpcH/HpaI aldolase family. KDGluc aldolase subfamily. In terms of assembly, homohexamer; trimer of dimers. The cofactor is Mg(2+).

It catalyses the reaction 5-dehydro-4-deoxy-D-glucarate = 2-hydroxy-3-oxopropanoate + pyruvate. The enzyme catalyses 2-dehydro-3-deoxy-D-glucarate = 2-hydroxy-3-oxopropanoate + pyruvate. It participates in carbohydrate acid metabolism; galactarate degradation; D-glycerate from galactarate: step 2/3. In terms of biological role, catalyzes the reversible retro-aldol cleavage of both 5-keto-4-deoxy-D-glucarate and 2-keto-3-deoxy-D-glucarate to pyruvate and tartronic semialdehyde. The chain is 5-keto-4-deoxy-D-glucarate aldolase from Escherichia coli (strain K12 / DH10B).